The following is a 1445-amino-acid chain: Tensin-3 (1445 aa).

Positions 1 to 170 (MEEGHGLDLT…QFLSGLLSGS (170 aa)) constitute a Phosphatase tensin-type domain. Positions 175-301 (ASPLFLHFVI…GKVELVFSAT (127 aa)) constitute a C2 tensin-type domain. The residue at position 323 (Thr323) is a Phosphothreonine. 2 positions are modified to phosphoserine: Ser332 and Ser361. The segment at 358 to 421 (RKKSSSDPGI…GTRRGLSAQE (64 aa)) is disordered. A compositionally biased stretch (polar residues) spans 386-400 (TLSVSSDSGHSTASA). Ser440 and Ser516 each carry phosphoserine. The segment at 538–568 (VPDLGLGMDGPYERERTFGSREPKQPQPLLR) is disordered. Residues 548-561 (PYERERTFGSREPK) are compositionally biased toward basic and acidic residues. Phosphoserine is present on Ser571. Disordered stretches follow at residues 618–695 (DNPG…TLDI) and 717–769 (PTHM…QPLG). Phosphothreonine is present on Thr632. Ser649, Ser660, Ser687, and Ser690 each carry phosphoserine. A compositionally biased stretch (polar residues) spans 723-733 (LGSQANGSVSP). Residues Ser735 and Ser776 each carry the phosphoserine modification. Tyr780 carries the phosphotyrosine modification. Ser811, Ser866, and Ser901 each carry phosphoserine. 2 disordered regions span residues 859–981 (ALRH…TRKD) and 1076–1127 (GHSS…PHSG). Positions 864 to 873 (PFSPPEPPLS) are enriched in pro residues. Residues 914–935 (ASSTPSFQQAFASSCTISSNGP) are compositionally biased toward polar residues. Over residues 1099–1109 (PEKKRASEGDR) the composition is skewed to basic and acidic residues. The segment covering 1110–1127 (SLGSVSPSSSGFSSPHSG) has biased composition (low complexity). Ser1149 and Ser1154 each carry phosphoserine. Residues 1172-1282 (WYKADISREQ…ALPCKLLIPE (111 aa)) enclose the SH2 domain. Phosphoserine is present on residues Ser1293 and Ser1441. Positions 1310 to 1444 (ACNVWYLNSV…SKVMIGSPKK (135 aa)) constitute a PTB domain.

This sequence belongs to the PTEN phosphatase protein family. In terms of assembly, interacts with EGFR; EGF promotes the interaction with EGFR. Interacts with PTK2/FAK1 and BCAR1. Tyrosine phosphorylation is critical for these interactions. Interacts with Rho GTPase-activating protein DLC1 and with the regulatory p85 subunit of the PI3K kinase complex; in resting cells, interacts (via C2 tensin-type domain) with DLC1 but, following growth factor stimulation, TNS3 is phosphorylated which leads to weakened interaction with DLC1 and enhanced interaction (via C2 tensin-type domain) with p85 while DLC1 interaction with PTEN increases. Interacts (when phosphorylated on the SH2 domain) with integrins ITGB1, ITGB3 and ITGB5 and with scaffolding protein PEAK1 (phosphorylated on 'Tyr-635'); mediates the association of PEAK1 with ITGB1, ITGB3 and ITGB5. Interacts (via N-terminus) with DOCK5 (via N-terminus); the interaction increases DOCK5 guanine nucleotide exchange activity towards Rac. Interacts with receptor tyrosine kinase MET. Post-translationally, phosphorylated on Ser/Thr and Tyr residues. Phosphorylated on Thr-323 in the C2-type tensin domain following EGF stimulation which changes its binding preference from DLC1 to the p85 regulatory subunit of the PI3K kinase complex. EGF induces tyrosine phosphorylation in a time- and dose-dependent manner. Phosphorylation of the SH2 domain enhances interaction with PEAK1. In terms of tissue distribution, expressed in umbilical vein endothelial cells, epithelial cells, and fibroblasts cells (at protein level). Highly expressed in thyroid, kidney and placenta. Low expression in heart, skeletal muscle, spleen, liver, and lung. Expressed at higher levels in tonsil-derived mesenchymal stem cells (MSCs) than in adipose tissue-derived MSCs or bone marrow-derived MSCs. Expressed in tumor endothelial cells. Expression seems to be down-regulated in thyroid tumor tissues and in anaplastic carcinomas.

The protein resides in the cell junction. Its subcellular location is the focal adhesion. It localises to the cell projection. The protein localises to the podosome. Its function is as follows. May act as a protein phosphatase and/or a lipid phosphatase. Involved in the dissociation of the integrin-tensin-actin complex. EGF activates TNS4 and down-regulates TNS3 which results in capping the tail of ITGB1. Increases DOCK5 guanine nucleotide exchange activity towards Rac and plays a role in osteoclast podosome organization. Enhances RHOA activation in the presence of DLC1. Required for growth factor-induced epithelial cell migration; growth factor stimulation induces TNS3 phosphorylation which changes its binding preference from DLC1 to the p85 regulatory subunit of the PI3K kinase complex, displacing PI3K inhibitor PTEN and resulting in translocation of the TNS3-p85 complex to the leading edge of migrating cells to promote RAC1 activation. Meanwhile, PTEN switches binding preference from p85 to DLC1 and the PTEN-DLC1 complex translocates to the posterior of migrating cells to activate RHOA. Acts as an adapter protein by bridging the association of scaffolding protein PEAK1 with integrins ITGB1, ITGB3 and ITGB5 which contributes to the promotion of cell migration. Controls tonsil-derived mesenchymal stem cell proliferation and differentiation by regulating the activity of integrin ITGB1. This Homo sapiens (Human) protein is Tensin-3 (TNS3).